A 138-amino-acid polypeptide reads, in one-letter code: MRTLWIVAMCLIGVEGNLFQFARLIDAKQEAFSFFKYISYGCYCGWGGQGTPKDATDRCCFVHDCCYARVKGCNPKLVEYSYGYRTGKIVCENYNRCKRAVCECDRVAAICLGQNVNTYNKGYMFLSSYYCRQKSEQC.

Residues methionine 1–glycine 16 form the signal peptide. Disulfide bonds link cysteine 42/cysteine 131, cysteine 44/cysteine 60, cysteine 59/cysteine 111, cysteine 65/cysteine 138, cysteine 66/cysteine 104, cysteine 73/cysteine 97, and cysteine 91/cysteine 102. Ca(2+)-binding residues include tyrosine 43, glycine 45, and glycine 47. Histidine 63 is an active-site residue. Aspartate 64 lines the Ca(2+) pocket. Residue aspartate 105 is part of the active site.

The cofactor is Ca(2+). As to expression, expressed by the venom gland.

The protein localises to the secreted. It carries out the reaction a 1,2-diacyl-sn-glycero-3-phosphocholine + H2O = a 1-acyl-sn-glycero-3-phosphocholine + a fatty acid + H(+). In terms of biological role, exhibits high hydrolytic activities and shows strong preference for the anionic micelles (dPPC with deoxycholate) to the zwitterionic micelles (dPPC with Triton X-100). PLA2 catalyzes the calcium-dependent hydrolysis of the 2-acyl groups in 3-sn-phosphoglycerides. The sequence is that of Basic phospholipase A2 DsM-b1/DsM-b1' from Daboia siamensis (Eastern Russel's viper).